The chain runs to 206 residues: Protein-methionine-sulfoxide reductase heme-binding subunit MsrQ (206 aa).

Transmembrane regions (helical) follow at residues 10-30 (VFIA…SAVL), 42-62 (LGLG…LQKL), 75-95 (LGLW…VFVL), 110-130 (PYII…VTSN), 147-167 (LVYV…RADL), and 169-189 (EWAI…PPVM).

It belongs to the MsrQ family. In terms of assembly, heterodimer of a catalytic subunit (MsrP) and a heme-binding subunit (MsrQ). FMN is required as a cofactor. The cofactor is heme b.

It localises to the cell inner membrane. Part of the MsrPQ system that repairs oxidized periplasmic proteins containing methionine sulfoxide residues (Met-O), using respiratory chain electrons. Thus protects these proteins from oxidative-stress damage caused by reactive species of oxygen and chlorine generated by the host defense mechanisms. MsrPQ is essential for the maintenance of envelope integrity under bleach stress, rescuing a wide series of structurally unrelated periplasmic proteins from methionine oxidation. MsrQ provides electrons for reduction to the reductase catalytic subunit MsrP, using the quinone pool of the respiratory chain. The polypeptide is Protein-methionine-sulfoxide reductase heme-binding subunit MsrQ (Pseudomonas fluorescens (strain SBW25)).